Consider the following 428-residue polypeptide: Mitochondrial import inner membrane translocase subunit TIM50-C (428 aa).

A helical membrane pass occupies residues 59–79; the sequence is LFTCTALPAAAPALFSILHTA. Over 80–428 the chain is Mitochondrial intermembrane; it reads RGYSSTTKQE…KQWSRNILGR (349 aa). Residues 112–138 are disordered; sequence FPQTSPEVDSNAEQERKKREEEEEKEN. The segment covering 124–138 has biased composition (basic and acidic residues); it reads EQERKKREEEEEKEN. The 144-residue stretch at 224–367 folds into the FCP1 homology domain; the sequence is YVQPRYTLVL…LDLIAFLKII (144 aa).

This sequence belongs to the TIM50 family. Component of the TIM23 complex at least composed of Tim23, Tim17 (Tim17a1, Tim17a2 or Tim17b1) and a Tim50.

The protein localises to the mitochondrion inner membrane. Essential component of the TIM23 complex, a complex that mediates the translocation of transit peptide-containing proteins across the mitochondrial inner membrane. This is Mitochondrial import inner membrane translocase subunit TIM50-C (ttm50) from Drosophila melanogaster (Fruit fly).